We begin with the raw amino-acid sequence, 77 residues long: uncharacterized protein (77 aa).

The next 2 helical transmembrane spans lie at 3 to 23 and 35 to 55; these read FNFIEFLGYMATFFVAASFLF and IGAILFVIYSLIITAYPVALL.

It localises to the cell membrane. This is an uncharacterized protein from Haemophilus influenzae (strain ATCC 51907 / DSM 11121 / KW20 / Rd).